The following is an 817-amino-acid chain: Probable beta-glucosidase G (817 aa).

An N-terminal signal peptide occupies residues 1–20; it reads MASIAHLIFSGLLAATVANS. N-linked (GlcNAc...) asparagine glycans are attached at residues Asn-40, Asn-58, Asn-229, and Asn-276. Asp-304 is an active-site residue. Asn-343, Asn-350, Asn-402, Asn-507, Asn-563, Asn-584, Asn-623, Asn-662, Asn-679, and Asn-715 each carry an N-linked (GlcNAc...) asparagine glycan.

Belongs to the glycosyl hydrolase 3 family.

Its subcellular location is the secreted. It carries out the reaction Hydrolysis of terminal, non-reducing beta-D-glucosyl residues with release of beta-D-glucose.. The protein operates within glycan metabolism; cellulose degradation. In terms of biological role, beta-glucosidases are one of a number of cellulolytic enzymes involved in the degradation of cellulosic biomass. Catalyzes the last step releasing glucose from the inhibitory cellobiose. The sequence is that of Probable beta-glucosidase G (bglG) from Neosartorya fischeri (strain ATCC 1020 / DSM 3700 / CBS 544.65 / FGSC A1164 / JCM 1740 / NRRL 181 / WB 181) (Aspergillus fischerianus).